The following is a 1589-amino-acid chain: Pentafunctional AROM polypeptide (1589 aa).

A 3-dehydroquinate synthase region spans residues 1–384 (MAAPTTIKIL…HEQQASVVSN (384 aa)). Residues 44–46 (DTT), 81–84 (ELSK), 114–116 (GGV), and D119 each bind NAD(+). Position 130 (R130) interacts with 7-phospho-2-dehydro-3-deoxy-D-arabino-heptonate. 139–140 (TT) provides a ligand contact to NAD(+). 7-phospho-2-dehydro-3-deoxy-D-arabino-heptonate is bound by residues D146 and K152. K161 serves as a coordination point for NAD(+). N162 contacts 7-phospho-2-dehydro-3-deoxy-D-arabino-heptonate. NAD(+) contacts are provided by residues 179 to 182 (FLNT) and N190. Residue E194 participates in Zn(2+) binding. Residues 194-197 (EVIK) and K250 each bind 7-phospho-2-dehydro-3-deoxy-D-arabino-heptonate. The Proton acceptor; for 3-dehydroquinate synthase activity role is filled by E260. Residues 264 to 268 (RNLLN) and H271 contribute to the 7-phospho-2-dehydro-3-deoxy-D-arabino-heptonate site. Position 271 (H271) interacts with Zn(2+). The active-site Proton acceptor; for 3-dehydroquinate synthase activity is the H275. 7-phospho-2-dehydro-3-deoxy-D-arabino-heptonate is bound by residues H287 and K356. H287 is a Zn(2+) binding site. Residues 397–841 (VSPGVPKSLQ…WDTLAQLFKA (445 aa)) are EPSP synthase. C823 acts as the For EPSP synthase activity in catalysis. The segment at 861–1052 (ASIFIIGMRG…KKKPQSFFVS (192 aa)) is shikimate kinase. Residue 867–874 (GMRGAGKT) coordinates ATP. Residues 1053 to 1273 (LTLPDLRPSA…AAPGQLSAQD (221 aa)) form a 3-dehydroquinase region. H1176 (proton acceptor; for 3-dehydroquinate dehydratase activity) is an active-site residue. Residue K1204 is the Schiff-base intermediate with substrate; for 3-dehydroquinate dehydratase activity of the active site. Positions 1286–1589 (PRKFAIFGKP…VMNPGTDNRG (304 aa)) are shikimate dehydrogenase.

This sequence in the N-terminal section; belongs to the sugar phosphate cyclases superfamily. Dehydroquinate synthase family. In the 2nd section; belongs to the EPSP synthase family. It in the 3rd section; belongs to the shikimate kinase family. The protein in the 4th section; belongs to the type-I 3-dehydroquinase family. This sequence in the C-terminal section; belongs to the shikimate dehydrogenase family. As to quaternary structure, homodimer. The cofactor is Zn(2+).

The protein resides in the cytoplasm. It carries out the reaction 7-phospho-2-dehydro-3-deoxy-D-arabino-heptonate = 3-dehydroquinate + phosphate. The enzyme catalyses 3-dehydroquinate = 3-dehydroshikimate + H2O. It catalyses the reaction shikimate + NADP(+) = 3-dehydroshikimate + NADPH + H(+). The catalysed reaction is shikimate + ATP = 3-phosphoshikimate + ADP + H(+). It carries out the reaction 3-phosphoshikimate + phosphoenolpyruvate = 5-O-(1-carboxyvinyl)-3-phosphoshikimate + phosphate. Its pathway is metabolic intermediate biosynthesis; chorismate biosynthesis; chorismate from D-erythrose 4-phosphate and phosphoenolpyruvate: step 2/7. It participates in metabolic intermediate biosynthesis; chorismate biosynthesis; chorismate from D-erythrose 4-phosphate and phosphoenolpyruvate: step 3/7. It functions in the pathway metabolic intermediate biosynthesis; chorismate biosynthesis; chorismate from D-erythrose 4-phosphate and phosphoenolpyruvate: step 4/7. The protein operates within metabolic intermediate biosynthesis; chorismate biosynthesis; chorismate from D-erythrose 4-phosphate and phosphoenolpyruvate: step 5/7. Its pathway is metabolic intermediate biosynthesis; chorismate biosynthesis; chorismate from D-erythrose 4-phosphate and phosphoenolpyruvate: step 6/7. The AROM polypeptide catalyzes 5 consecutive enzymatic reactions in prechorismate polyaromatic amino acid biosynthesis. The polypeptide is Pentafunctional AROM polypeptide (Coccidioides posadasii (strain C735) (Valley fever fungus)).